The chain runs to 790 residues: Cadherin-18 (790 aa).

The N-terminal stretch at 1-24 (MKITSTSCICPVLVCLCFVQRCYG) is a signal peptide. A propeptide spanning residues 25–53 (TTHHGSIRGTRNQTKHIEGETEVHHRPKR) is cleaved from the precursor. An N-linked (GlcNAc...) asparagine glycan is attached at Asn36. Cadherin domains lie at 54–159 (GWVW…APKF), 160–268 (TDGP…PPRF), 269–383 (PQKH…PPLF), 384–486 (SMPS…DNPP), and 487–608 (ELAR…FLSS). Topologically, residues 54–608 (GWVWNQFFVL…TCHAEAFLSS (555 aa)) are extracellular. N-linked (GlcNAc...) asparagine glycosylation occurs at Asn255. 2 N-linked (GlcNAc...) asparagine glycosylation sites follow: Asn455 and Asn536. Residues 609-636 (AGLSTGALIAILLCVVILLAIVVLFITL) traverse the membrane as a helical segment. Residues 637 to 790 (RRSKKEPLII…YGEIESERTT (154 aa)) are Cytoplasmic-facing. Position 786 is a phosphoserine (Ser786).

The protein localises to the cell membrane. Its function is as follows. Cadherins are calcium-dependent cell adhesion proteins. They preferentially interact with themselves in a homophilic manner in connecting cells; cadherins may thus contribute to the sorting of heterogeneous cell types. The protein is Cadherin-18 (CDH18) of Bos taurus (Bovine).